The primary structure comprises 315 residues: Calumenin (315 aa).

The signal sequence occupies residues 1–19; it reads MDLRQFLMCLSLCTAFALS. S44 bears the Phosphoserine mark. At Y47 the chain carries Phosphotyrosine. Residue T65 is modified to Phosphothreonine. 6 EF-hand domains span residues 68 to 103, 104 to 139, 151 to 186, 188 to 223, 229 to 264, and 265 to 300; these read ESKE…AQKK, YIYD…TYLD, QMMV…EEYD, MKDI…HDGN, WVKT…SDYD, and HAEA…FVGS. S69 is subject to Phosphoserine. Ca(2+)-binding residues include D81, D83, D85, E92, D117, N119, D121, and E128. An N-linked (GlcNAc...) asparagine glycan is attached at N131. D164 serves as a coordination point for Ca(2+). Residue K165 is modified to N6-acetyllysine. Ca(2+) contacts are provided by D166, D168, E175, D201, N203, D205, E212, D242, N244, D246, K248, and E253. T254 is modified (phosphothreonine). S261 and S277 each carry phosphoserine. Positions 278, 280, 282, 284, and 289 each coordinate Ca(2+). Residues 312 to 315 carry the Prevents secretion from ER motif; the sequence is HDEF.

The protein belongs to the CREC family. Interacts with GGCX.

The protein localises to the endoplasmic reticulum membrane. It localises to the golgi apparatus. The protein resides in the secreted. Its subcellular location is the melanosome. It is found in the sarcoplasmic reticulum lumen. Functionally, involved in regulation of vitamin K-dependent carboxylation of multiple N-terminal glutamate residues. Seems to inhibit gamma-carboxylase GGCX. Binds 7 calcium ions with a low affinity. The sequence is that of Calumenin (CALU) from Bos taurus (Bovine).